The following is a 297-amino-acid chain: 4-hydroxy-tetrahydrodipicolinate synthase (297 aa).

Thr49 contacts pyruvate. Residue Tyr137 is the Proton donor/acceptor of the active site. Lys166 serves as the catalytic Schiff-base intermediate with substrate. Residue Ile208 coordinates pyruvate.

This sequence belongs to the DapA family. Homotetramer; dimer of dimers.

The protein localises to the cytoplasm. The catalysed reaction is L-aspartate 4-semialdehyde + pyruvate = (2S,4S)-4-hydroxy-2,3,4,5-tetrahydrodipicolinate + H2O + H(+). It functions in the pathway amino-acid biosynthesis; L-lysine biosynthesis via DAP pathway; (S)-tetrahydrodipicolinate from L-aspartate: step 3/4. Its function is as follows. Catalyzes the condensation of (S)-aspartate-beta-semialdehyde [(S)-ASA] and pyruvate to 4-hydroxy-tetrahydrodipicolinate (HTPA). In Porphyromonas gingivalis (strain ATCC 33277 / DSM 20709 / CIP 103683 / JCM 12257 / NCTC 11834 / 2561), this protein is 4-hydroxy-tetrahydrodipicolinate synthase.